The chain runs to 227 residues: UPF0173 metal-dependent hydrolase BALH_4194 (227 aa).

The protein belongs to the UPF0173 family.

In Bacillus thuringiensis (strain Al Hakam), this protein is UPF0173 metal-dependent hydrolase BALH_4194.